The sequence spans 258 residues: Axonemal dynein light intermediate polypeptide 1 (258 aa).

Disordered regions lie at residues 1-60 (MIPP…CVPD) and 207-231 (VNEQ…EEKK). Residues 34 to 44 (SPQQPGPSGSA) are compositionally biased toward low complexity. Residues 176–255 (MRKALQAEQG…LKAQLEGIIA (80 aa)) adopt a coiled-coil conformation.

It belongs to the inner dynein arm light chain family. Interacts with CFAP45. Interacts with DYNC1H1. Expressed in many tissues. A smaller 0.9 kb and a larger 2.5 kb transcripts were detected at the highest level in the testis, at medium levels in the prostate, heart, liver, lung and pancreas, at low levels in the ovary, skeletal muscle and small intestine. Not detected in spleen, colon epithelium, thymus or peripheral blood leukocytes. The 0.9 kb transcript is expressed at a 20-fold higher level than the 2.5 kb transcript in the testis. Expressed in spermatozoa and airway epithelial cells (at protein level).

Its subcellular location is the cell projection. It localises to the cilium. The protein localises to the flagellum. It is found in the dynein axonemal particle. The protein resides in the cytoplasm. In terms of biological role, involved in sperm flagellum assembly. This is Axonemal dynein light intermediate polypeptide 1 from Homo sapiens (Human).